A 416-amino-acid polypeptide reads, in one-letter code: Casein kinase I isoform epsilon (416 aa).

In terms of domain architecture, Protein kinase spans 9–277; sequence YRLGRKIGSG…YLRQLFRNLF (269 aa). ATP contacts are provided by residues 15–23 and K38; that span reads IGSGSFGDI. The Proton acceptor role is filled by D128. Over residues 301 to 318 the composition is skewed to basic and acidic residues; it reads PEDMDRERREHEREERMG. Residues 301–416 form a disordered region; that stretch reads PEDMDRERRE…TSVPFDHLGK (116 aa). Residues 324–338 show a composition bias toward low complexity; it reads ATRALPPGPPAGATG. 2 stretches are compositionally biased toward polar residues: residues 350–365 and 400–409; these read STPT…TSPR and SRISASQTSV.

This sequence belongs to the protein kinase superfamily. CK1 Ser/Thr protein kinase family. Casein kinase I subfamily. Monomer. Component of the circadian core oscillator, which includes the CRY proteins, CLOCK, or NPAS2, BMAL1 or BMAL2, CSNK1E, and the PER proteins.

It is found in the cytoplasm. It catalyses the reaction L-seryl-[protein] + ATP = O-phospho-L-seryl-[protein] + ADP + H(+). The catalysed reaction is L-threonyl-[protein] + ATP = O-phospho-L-threonyl-[protein] + ADP + H(+). Functionally, casein kinases are operationally defined by their preferential utilization of acidic proteins such as caseins as substrates. Can phosphorylate a large number of proteins. Participates in Wnt signaling. Phosphorylates DVL1. Central component of the circadian clock. May act as a negative regulator of circadian rhythmicity by phosphorylating PER1 and PER2. Retains PER1 in the cytoplasm. The sequence is that of Casein kinase I isoform epsilon (CSNK1E) from Gallus gallus (Chicken).